Consider the following 518-residue polypeptide: Metalloprotease TIKI2 (518 aa).

Positions 1–22 (MNCQSGLRWLVTLCAFFQVGSA) are cleaved as a signal peptide. Over 23 to 499 (RDTHESTRQC…SALDSAAPNP (477 aa)) the chain is Extracellular. N-linked (GlcNAc...) asparagine glycans are attached at residues asparagine 224, asparagine 233, asparagine 282, asparagine 325, and asparagine 340. Residues 500–517 (TYALTCFLACLISQLLFA) form a helical membrane-spanning segment. Position 518 (serine 518) is a topological domain, cytoplasmic.

It belongs to the TIKI family. Mn(2+) is required as a cofactor. Co(2+) serves as cofactor.

The protein resides in the cell membrane. In terms of biological role, metalloprotease that acts as a negative regulator of the Wnt signaling pathway by mediating the cleavage of the N-terminal residues of a subset of Wnt proteins. Following cleavage, Wnt proteins become oxidized and form large disulfide-bond oligomers, leading to their inactivation. The sequence is that of Metalloprotease TIKI2 (trabd2b) from Danio rerio (Zebrafish).